The sequence spans 322 residues: Lipoyl synthase (322 aa).

Positions 69, 74, 80, 95, 99, 102, and 309 each coordinate [4Fe-4S] cluster. Residues 81–298 (FNHGTATFMI…GVKAKALGFD (218 aa)) form the Radical SAM core domain.

This sequence belongs to the radical SAM superfamily. Lipoyl synthase family. [4Fe-4S] cluster is required as a cofactor.

The protein localises to the cytoplasm. It catalyses the reaction [[Fe-S] cluster scaffold protein carrying a second [4Fe-4S](2+) cluster] + N(6)-octanoyl-L-lysyl-[protein] + 2 oxidized [2Fe-2S]-[ferredoxin] + 2 S-adenosyl-L-methionine + 4 H(+) = [[Fe-S] cluster scaffold protein] + N(6)-[(R)-dihydrolipoyl]-L-lysyl-[protein] + 4 Fe(3+) + 2 hydrogen sulfide + 2 5'-deoxyadenosine + 2 L-methionine + 2 reduced [2Fe-2S]-[ferredoxin]. It participates in protein modification; protein lipoylation via endogenous pathway; protein N(6)-(lipoyl)lysine from octanoyl-[acyl-carrier-protein]: step 2/2. In terms of biological role, catalyzes the radical-mediated insertion of two sulfur atoms into the C-6 and C-8 positions of the octanoyl moiety bound to the lipoyl domains of lipoate-dependent enzymes, thereby converting the octanoylated domains into lipoylated derivatives. In Psychromonas ingrahamii (strain DSM 17664 / CCUG 51855 / 37), this protein is Lipoyl synthase.